The chain runs to 378 residues: Chaperone protein DnaJ (378 aa).

The 66-residue stretch at 5-70 (DYYESLGVAK…QKRAAYDQYG (66 aa)) folds into the J domain. A CR-type zinc finger spans residues 133–211 (GVTKEIRIPA…CHGHGRVEKS (79 aa)). Zn(2+) contacts are provided by cysteine 146, cysteine 149, cysteine 163, cysteine 166, cysteine 185, cysteine 188, cysteine 199, and cysteine 202. CXXCXGXG motif repeat units follow at residues 146–153 (CDVCHGNG), 163–170 (CPTCHGNG), 185–192 (CPHCHGRG), and 199–206 (CVKCHGHG).

The protein belongs to the DnaJ family. Homodimer. Requires Zn(2+) as cofactor.

The protein localises to the cytoplasm. In terms of biological role, participates actively in the response to hyperosmotic and heat shock by preventing the aggregation of stress-denatured proteins and by disaggregating proteins, also in an autonomous, DnaK-independent fashion. Unfolded proteins bind initially to DnaJ; upon interaction with the DnaJ-bound protein, DnaK hydrolyzes its bound ATP, resulting in the formation of a stable complex. GrpE releases ADP from DnaK; ATP binding to DnaK triggers the release of the substrate protein, thus completing the reaction cycle. Several rounds of ATP-dependent interactions between DnaJ, DnaK and GrpE are required for fully efficient folding. Also involved, together with DnaK and GrpE, in the DNA replication of plasmids through activation of initiation proteins. This Pectobacterium carotovorum subsp. carotovorum (strain PC1) protein is Chaperone protein DnaJ.